Consider the following 1403-residue polypeptide: DNA-directed RNA polymerase subunit beta' (1403 aa).

Zn(2+) contacts are provided by Cys70, Cys72, Cys85, and Cys88. Residues Asp460, Asp462, and Asp464 each coordinate Mg(2+). Zn(2+)-binding residues include Cys814, Cys888, Cys895, and Cys898. Residues 1369 to 1403 form a disordered region; sequence RRKRRMLEQPESLTADTGTSHYGEDEISESGAATA. The span at 1379-1388 shows a compositional bias: polar residues; that stretch reads ESLTADTGTS.

This sequence belongs to the RNA polymerase beta' chain family. The RNAP catalytic core consists of 2 alpha, 1 beta, 1 beta' and 1 omega subunit. When a sigma factor is associated with the core the holoenzyme is formed, which can initiate transcription. Mg(2+) serves as cofactor. It depends on Zn(2+) as a cofactor.

The catalysed reaction is RNA(n) + a ribonucleoside 5'-triphosphate = RNA(n+1) + diphosphate. In terms of biological role, DNA-dependent RNA polymerase catalyzes the transcription of DNA into RNA using the four ribonucleoside triphosphates as substrates. This chain is DNA-directed RNA polymerase subunit beta', found in Nitrosococcus oceani (strain ATCC 19707 / BCRC 17464 / JCM 30415 / NCIMB 11848 / C-107).